The primary structure comprises 249 residues: 3-deoxy-D-manno-octulosonic acid kinase (249 aa).

Asp175 is an active-site residue.

It belongs to the protein kinase superfamily. KdkA/RfaP family.

It is found in the cell inner membrane. It catalyses the reaction an alpha-Kdo-(2-&gt;6)-lipid IVA + ATP = a 4-O-phospho-alpha-Kdo-(2-&gt;6)-lipid IVA + ADP + H(+). It participates in bacterial outer membrane biogenesis; LPS core biosynthesis. Catalyzes the ATP-dependent phosphorylation of the 3-deoxy-D-manno-octulosonic acid (Kdo) residue in Kdo-lipid IV(A) at the 4-OH position. This is 3-deoxy-D-manno-octulosonic acid kinase from Xylella fastidiosa (strain M23).